A 339-amino-acid chain; its full sequence is Phosphate acyltransferase (339 aa).

This sequence belongs to the PlsX family. In terms of assembly, homodimer. Probably interacts with PlsY.

Its subcellular location is the cytoplasm. It carries out the reaction a fatty acyl-[ACP] + phosphate = an acyl phosphate + holo-[ACP]. The protein operates within lipid metabolism; phospholipid metabolism. Its function is as follows. Catalyzes the reversible formation of acyl-phosphate (acyl-PO(4)) from acyl-[acyl-carrier-protein] (acyl-ACP). This enzyme utilizes acyl-ACP as fatty acyl donor, but not acyl-CoA. The sequence is that of Phosphate acyltransferase from Helicobacter acinonychis (strain Sheeba).